Reading from the N-terminus, the 346-residue chain is Phosphoribosylformylglycinamidine cyclo-ligase (346 aa).

Belongs to the AIR synthase family.

The protein resides in the cytoplasm. The catalysed reaction is 2-formamido-N(1)-(5-O-phospho-beta-D-ribosyl)acetamidine + ATP = 5-amino-1-(5-phospho-beta-D-ribosyl)imidazole + ADP + phosphate + H(+). Its pathway is purine metabolism; IMP biosynthesis via de novo pathway; 5-amino-1-(5-phospho-D-ribosyl)imidazole from N(2)-formyl-N(1)-(5-phospho-D-ribosyl)glycinamide: step 2/2. The polypeptide is Phosphoribosylformylglycinamidine cyclo-ligase (Erwinia tasmaniensis (strain DSM 17950 / CFBP 7177 / CIP 109463 / NCPPB 4357 / Et1/99)).